Consider the following 1137-residue polypeptide: UDP-N-acetylglucosamine transferase subunit ALG13 (1137 aa).

The segment at 1–125 is glycosyltransferase activity; it reads MKCVFVTVGT…LHKEGHLFYC (125 aa). The interval 126 to 400 is deubiquitinase activity; sequence TCRVLTCPGQ…GSKKNRNNAV (275 aa). One can recognise an OTU domain in the interval 231 to 352; it reads LFRKLTAKDA…SGHYDSVYSK (122 aa). The active-site For deubiquitinase activity is aspartate 239. Catalysis depends on cysteine 242, which acts as the Nucleophile; for deubiquitinase activity. Histidine 345 functions as the For deubiquitinase activity in the catalytic mechanism. The Tudor domain maps to 492–552; that stretch reads QYYLGDKCQV…KPVTQVMSVP (61 aa). Disordered stretches follow at residues 641–660 and 911–974; these read HFHPQHPSPRQGRGYGMPRN and IPHA…SGSD. 2 stretches are compositionally biased toward pro residues: residues 918–946 and 956–967; these read LPPPPPPPPPPPPPPPPPPPPPPPPPPPA and QPPPPLPPPPYS.

This sequence belongs to the glycosyltransferase 28 family. As to quaternary structure, forms with ALG14 the active heterodimeric UDP-N-acetylglucosamine transferase complex. In terms of assembly, not able to interact with ALG14 to form an active UDP-N-acetylglucosamine transferase complex.

Its subcellular location is the endoplasmic reticulum membrane. It carries out the reaction an N-acetyl-alpha-D-glucosaminyl-diphospho-di-trans,poly-cis-dolichol + UDP-N-acetyl-alpha-D-glucosamine = an N,N'-diacetylchitobiosyl-diphospho-di-trans,poly-cis-dolichol + UDP + H(+). Its pathway is protein modification; protein glycosylation. Its function is as follows. Catalytic subunit of the UDP-N-acetylglucosamine transferase complex that operates in the biosynthetic pathway of dolichol-linked oligosaccharides, the glycan precursors employed in protein asparagine (N)-glycosylation. The assembly of dolichol-linked oligosaccharides begins on the cytosolic side of the endoplasmic reticulum membrane and finishes in its lumen. The sequential addition of sugars to dolichol pyrophosphate produces dolichol-linked oligosaccharides containing fourteen sugars, including two GlcNAcs, nine mannoses and three glucoses. Once assembled, the oligosaccharide is transferred from the lipid to nascent proteins by oligosaccharyltransferases. On the cytoplasmic face of the endoplasmic reticulum, the dimeric ALG13/ALG14 complex catalyzes the second step of dolichol pyrophosphate biosynthesis, transferring a beta1,4-linked N-acetylglucosamine (GlcNAc) from UDP-GlcNAc to GlcNAc-pyrophosphatedolichol (Gn-PDol) to produce N,N'-diacetylchitobiosyl diphosphodolichol. N,N'-diacetylchitobiosyl diphosphodolichol is a substrate for ALG1, the following enzyme in the biosynthetic pathway. In terms of biological role, no glycosyltransferase or deubiquitinase activity is detected for this potential multifunctional enzyme. In Homo sapiens (Human), this protein is UDP-N-acetylglucosamine transferase subunit ALG13.